Reading from the N-terminus, the 505-residue chain is Glycerol kinase (505 aa).

ADP is bound at residue Thr-15. ATP is bound by residues Thr-15, Thr-16, and Ser-17. A sn-glycerol 3-phosphate-binding site is contributed by Thr-15. Residue Arg-19 coordinates ADP. Residues Arg-85, Glu-86, Tyr-136, and Asp-249 each coordinate sn-glycerol 3-phosphate. Glycerol is bound by residues Arg-85, Glu-86, Tyr-136, Asp-249, and Gln-250. ADP-binding residues include Thr-271 and Gly-314. 4 residues coordinate ATP: Thr-271, Gly-314, Gln-318, and Gly-415. Gly-415 and Asn-419 together coordinate ADP.

The protein belongs to the FGGY kinase family.

The enzyme catalyses glycerol + ATP = sn-glycerol 3-phosphate + ADP + H(+). Its pathway is polyol metabolism; glycerol degradation via glycerol kinase pathway; sn-glycerol 3-phosphate from glycerol: step 1/1. With respect to regulation, inhibited by fructose 1,6-bisphosphate (FBP). Its function is as follows. Key enzyme in the regulation of glycerol uptake and metabolism. Catalyzes the phosphorylation of glycerol to yield sn-glycerol 3-phosphate. The polypeptide is Glycerol kinase (Mycoplasma mycoides subsp. mycoides SC (strain CCUG 32753 / NCTC 10114 / PG1)).